The primary structure comprises 458 residues: tRNA modification GTPase MnmE (458 aa).

Residues R22, E85, and R124 each coordinate (6S)-5-formyl-5,6,7,8-tetrahydrofolate. One can recognise a TrmE-type G domain in the interval 220–379; that stretch reads GIKTVIVGRP…LEEHISELVF (160 aa). N230 is a K(+) binding site. GTP-binding positions include 230–235, 249–255, and 274–277; these read NVGKSS, TEIPGTT, and DTAG. Mg(2+) is bound at residue S234. T249, I251, and T254 together coordinate K(+). Residue T255 participates in Mg(2+) binding. Residue K458 coordinates (6S)-5-formyl-5,6,7,8-tetrahydrofolate.

This sequence belongs to the TRAFAC class TrmE-Era-EngA-EngB-Septin-like GTPase superfamily. TrmE GTPase family. In terms of assembly, homodimer. Heterotetramer of two MnmE and two MnmG subunits. Requires K(+) as cofactor.

It localises to the cytoplasm. Its function is as follows. Exhibits a very high intrinsic GTPase hydrolysis rate. Involved in the addition of a carboxymethylaminomethyl (cmnm) group at the wobble position (U34) of certain tRNAs, forming tRNA-cmnm(5)s(2)U34. This Natranaerobius thermophilus (strain ATCC BAA-1301 / DSM 18059 / JW/NM-WN-LF) protein is tRNA modification GTPase MnmE.